The following is a 1445-amino-acid chain: 3'-5' RNA helicase YTHDC2 (1445 aa).

Residues 1-50 are disordered; that stretch reads MSRPSSVSPRPPAPSGGGTGGGGGGSGGGGGGGGGGPASCGPGGGGRAKG. Gly residues predominate over residues 15-48; that stretch reads SGGGTGGGGGGSGGGGGGGGGGPASCGPGGGGRA. Residues 53–121 form the R3H domain; sequence DIRIDEEVKI…NRYLTVKKKD (69 aa). In terms of domain architecture, Helicase ATP-binding spans 218-384; the sequence is VKIIKENKVV…FGSCPVIYIQ (167 aa). 231-238 serves as a coordination point for ATP; the sequence is GETGSGKT. The short motif at 331-334 is the DEAH box element; sequence DEVH. ANK repeat units lie at residues 521-553 and 554-586; these read TSAT…SKAS and NGWM…FGNL. Residues 627-799 form the Helicase C-terminal domain; sequence LLYNICHSCD…ELCLHTKLLA (173 aa). A phosphoserine mark is found at Ser1104, Ser1105, and Ser1107. Polar residues predominate over residues 1179 to 1189; that stretch reads EQSAGLQQPSG. The segment at 1179 to 1303 is disordered; the sequence is EQSAGLQQPS…SPSPRPNMPI (125 aa). The segment covering 1246–1264 has biased composition (basic and acidic residues); that stretch reads KYKDRGILHPKRSTDDRSD. The segment covering 1265-1279 has biased composition (low complexity); sequence QSSVKSTDSSSYPSP. 3 positions are modified to phosphoserine: Ser1278, Ser1282, and Ser1296. One can recognise a YTH domain in the interval 1303–1433; sequence IRYFIMKSSN…QVGEQLLQLW (131 aa). RNA is bound by residues 1309-1311, Trp1325, and Trp1375; that span reads KSS.

This sequence belongs to the DEAD box helicase family. DEAH subfamily. In terms of assembly, interacts with MEIOC; binds transcripts that regulate the mitotic cell cycle inhibiting progression into metaphase, thereby allowing meiotic prophase to proceed normally. Interacts (via ANK repeats) with XRN1. Interacts with ZCCHC4. Associates with the small ribosomal subunit. Interacts with RBM46. Present in male and female germ cells (at protein level). Highly expressed in testis. Not detected in spermatogonia next to the tubule wall but is strongly expressed in spermatocytes, suggesting that it is up-regulated in germ cells upon entry into meiosis (at protein level).

It is found in the cytoplasm. Its subcellular location is the perinuclear region. It carries out the reaction ATP + H2O = ADP + phosphate + H(+). Functionally, 3'-5' RNA helicase that plays a key role in the male and female germline by promoting transition from mitotic to meiotic divisions in stem cells. Specifically recognizes and binds N6-methyladenosine (m6A)-containing RNAs, a modification present at internal sites of mRNAs and some non-coding RNAs that plays a role in the efficiency of RNA processing and stability. Essential for ensuring a successful progression of the meiotic program in the germline by regulating the level of m6A-containing RNAs. Acts by binding and promoting degradation of m6A-containing mRNAs: the 3'-5' RNA helicase activity is required for this process and RNA degradation may be mediated by XRN1 exoribonuclease. Required for both spermatogenesis and oogenesis. The sequence is that of 3'-5' RNA helicase YTHDC2 from Mus musculus (Mouse).